We begin with the raw amino-acid sequence, 435 residues long: 3-phosphoshikimate 1-carboxyvinyltransferase (435 aa).

Positions 21, 22, and 26 each coordinate 3-phosphoshikimate. Lys21 serves as a coordination point for phosphoenolpyruvate. Phosphoenolpyruvate-binding residues include Gly100 and Arg128. 6 residues coordinate 3-phosphoshikimate: Ser171, Ser172, Gln173, Ser199, Asp313, and Lys340. Residue Gln173 participates in phosphoenolpyruvate binding. The active-site Proton acceptor is the Asp313. Phosphoenolpyruvate-binding residues include Arg344, Arg386, and Lys412.

This sequence belongs to the EPSP synthase family. As to quaternary structure, monomer.

It is found in the cytoplasm. The catalysed reaction is 3-phosphoshikimate + phosphoenolpyruvate = 5-O-(1-carboxyvinyl)-3-phosphoshikimate + phosphate. The protein operates within metabolic intermediate biosynthesis; chorismate biosynthesis; chorismate from D-erythrose 4-phosphate and phosphoenolpyruvate: step 6/7. Catalyzes the transfer of the enolpyruvyl moiety of phosphoenolpyruvate (PEP) to the 5-hydroxyl of shikimate-3-phosphate (S3P) to produce enolpyruvyl shikimate-3-phosphate and inorganic phosphate. The polypeptide is 3-phosphoshikimate 1-carboxyvinyltransferase (Clostridium novyi (strain NT)).